An 865-amino-acid polypeptide reads, in one-letter code: Protein translocase subunit SecA (865 aa).

ATP-binding positions include Q93, 111–115 (GEGKT), and D501. 4 residues coordinate Zn(2+): C841, C843, C852, and C853.

Belongs to the SecA family. In terms of assembly, monomer and homodimer. Part of the essential Sec protein translocation apparatus which comprises SecA, SecYEG and auxiliary proteins SecDF-YajC and YidC. Requires Zn(2+) as cofactor.

The protein resides in the cell inner membrane. It localises to the cytoplasm. The catalysed reaction is ATP + H2O + cellular proteinSide 1 = ADP + phosphate + cellular proteinSide 2.. Functionally, part of the Sec protein translocase complex. Interacts with the SecYEG preprotein conducting channel. Has a central role in coupling the hydrolysis of ATP to the transfer of proteins into and across the cell membrane, serving as an ATP-driven molecular motor driving the stepwise translocation of polypeptide chains across the membrane. This Helicobacter pylori (strain G27) protein is Protein translocase subunit SecA.